Consider the following 100-residue polypeptide: Small ribosomal subunit protein uS14c (100 aa).

The protein belongs to the universal ribosomal protein uS14 family. Part of the 30S ribosomal subunit.

Its subcellular location is the plastid. The protein resides in the chloroplast. Functionally, binds 16S rRNA, required for the assembly of 30S particles. The protein is Small ribosomal subunit protein uS14c of Cyanidioschyzon merolae (strain NIES-3377 / 10D) (Unicellular red alga).